The chain runs to 163 residues: Transcription antitermination protein NusB (163 aa).

This sequence belongs to the NusB family.

In terms of biological role, involved in transcription antitermination. Required for transcription of ribosomal RNA (rRNA) genes. Binds specifically to the boxA antiterminator sequence of the ribosomal RNA (rrn) operons. The sequence is that of Transcription antitermination protein NusB from Mycolicibacterium vanbaalenii (strain DSM 7251 / JCM 13017 / BCRC 16820 / KCTC 9966 / NRRL B-24157 / PYR-1) (Mycobacterium vanbaalenii).